Consider the following 121-residue polypeptide: UPF0102 protein Xfasm12_1748 (121 aa).

This sequence belongs to the UPF0102 family.

This Xylella fastidiosa (strain M12) protein is UPF0102 protein Xfasm12_1748.